The sequence spans 118 residues: Putative pterin-4-alpha-carbinolamine dehydratase (118 aa).

The protein belongs to the pterin-4-alpha-carbinolamine dehydratase family.

The enzyme catalyses (4aS,6R)-4a-hydroxy-L-erythro-5,6,7,8-tetrahydrobiopterin = (6R)-L-erythro-6,7-dihydrobiopterin + H2O. The polypeptide is Putative pterin-4-alpha-carbinolamine dehydratase (Pseudomonas fluorescens (strain ATCC BAA-477 / NRRL B-23932 / Pf-5)).